The following is a 339-amino-acid chain: Fructose-1,6-bisphosphatase, cytosolic (339 aa).

Residues Glu-70, Glu-99, Asp-120, Leu-122, and Asp-123 each coordinate Mg(2+). Substrate contacts are provided by residues 123–126 (DGSS), Asn-214, Tyr-246, Tyr-266, and Lys-276. Glu-282 is a binding site for Mg(2+).

This sequence belongs to the FBPase class 1 family. Mg(2+) serves as cofactor.

The protein resides in the cytoplasm. It carries out the reaction beta-D-fructose 1,6-bisphosphate + H2O = beta-D-fructose 6-phosphate + phosphate. In Brassica napus (Rape), this protein is Fructose-1,6-bisphosphatase, cytosolic.